The chain runs to 279 residues: MQYHDQSLQTLKLGKKTEYISTYDRTLLQAVPRKLNRDDLGISTKQPFSFGADIWTAYEISWLNLKGVPQVAIADVEIDYQSENLIESKSFKLYLNSFNQSQFENLQQVEQILQQDLIKCAKGQVKVRLNSLQNYAQQPIATLQGECIDEQDIEIRCYEFDPNLLENCTNKQWVEEKLVSHLLKSNCLITNQPDWGTVQIHYIGNQINREKLLRYLISFRQHNEFHEQCVERIFCDLMKFAQPEKLSVYARYTRRGGLDINPFRSNFEPIPLNQRLARQ.

86–88 provides a ligand contact to substrate; the sequence is IES. Residue 88 to 89 participates in NADPH binding; sequence SK. C187 functions as the Thioimide intermediate in the catalytic mechanism. D194 functions as the Proton donor in the catalytic mechanism. 226–227 is a binding site for substrate; it reads HE. 255–256 is a binding site for NADPH; the sequence is RG.

The protein belongs to the GTP cyclohydrolase I family. QueF type 2 subfamily. Homodimer.

The protein localises to the cytoplasm. The catalysed reaction is 7-aminomethyl-7-carbaguanine + 2 NADP(+) = 7-cyano-7-deazaguanine + 2 NADPH + 3 H(+). It functions in the pathway tRNA modification; tRNA-queuosine biosynthesis. Its function is as follows. Catalyzes the NADPH-dependent reduction of 7-cyano-7-deazaguanine (preQ0) to 7-aminomethyl-7-deazaguanine (preQ1). The polypeptide is NADPH-dependent 7-cyano-7-deazaguanine reductase (Histophilus somni (strain 129Pt) (Haemophilus somnus)).